A 213-amino-acid chain; its full sequence is Tellurium resistance protein TerX (213 aa).

This sequence belongs to the CAPAB/TerDEXZ family.

Its function is as follows. Not known; seems to contribute to the tellurium resistance (Ter) mechanism. Also involved in phage inhibition (Phi) and colicin resistance (PacB). The chain is Tellurium resistance protein TerX (terX) from Serratia marcescens.